The sequence spans 193 residues: Potassium-transporting ATPase KdpC subunit (193 aa).

The helical transmembrane segment at 11-31 (FTLVFMVLLGLVYPFVMTGIA) threads the bilayer.

Belongs to the KdpC family. As to quaternary structure, the system is composed of three essential subunits: KdpA, KdpB and KdpC.

It localises to the cell membrane. Part of the high-affinity ATP-driven potassium transport (or Kdp) system, which catalyzes the hydrolysis of ATP coupled with the electrogenic transport of potassium into the cytoplasm. This subunit acts as a catalytic chaperone that increases the ATP-binding affinity of the ATP-hydrolyzing subunit KdpB by the formation of a transient KdpB/KdpC/ATP ternary complex. This chain is Potassium-transporting ATPase KdpC subunit, found in Caldanaerobacter subterraneus subsp. tengcongensis (strain DSM 15242 / JCM 11007 / NBRC 100824 / MB4) (Thermoanaerobacter tengcongensis).